The sequence spans 357 residues: Inositol-tetrakisphosphate 1-kinase 3 (357 aa).

The 1D-myo-inositol 1,3,4-trisphosphate site is built by K56 and K98. Residues R133 and K183 each contribute to the ATP site. Residues H190 and K222 each coordinate 1D-myo-inositol 1,3,4-trisphosphate. ATP is bound by residues 211–222, S237, and S262; that span reads QEFVNHGGVLFK. Mg(2+) is bound by residues D302, D317, and N319. Position 319 (N319) interacts with 1D-myo-inositol 1,3,4-trisphosphate.

The protein belongs to the ITPK1 family. Monomer. Mg(2+) is required as a cofactor.

The catalysed reaction is 1D-myo-inositol 3,4,5,6-tetrakisphosphate + ATP = 1D-myo-inositol 1,3,4,5,6-pentakisphosphate + ADP + H(+). The enzyme catalyses 1D-myo-inositol 1,3,4-trisphosphate + ATP = 1D-myo-inositol 1,3,4,5-tetrakisphosphate + ADP + H(+). It carries out the reaction 1D-myo-inositol 1,3,4-trisphosphate + ATP = 1D-myo-inositol 1,3,4,6-tetrakisphosphate + ADP + H(+). In terms of biological role, kinase that can phosphorylate various inositol polyphosphate such as Ins(3,4,5,6)P4 or Ins(1,3,4)P3 and participates in phytic acid biosynthesis in developing seeds. Phytic acid is the primary storage form of phosphorus in cereal grains and other plant seeds. This Oryza sativa subsp. indica (Rice) protein is Inositol-tetrakisphosphate 1-kinase 3 (ITPK3).